Consider the following 129-residue polypeptide: F(420)H(2) dehydrogenase subunit A (129 aa).

The next 3 membrane-spanning stretches (helical) occupy residues 9–29, 64–84, and 95–115; these read IIDSYIPVAIFLAVGLIMPPM, FNVEYYLYAIAFVLFDIEVLF, and HGITSIAVVEMFVFIFILLFG.

It belongs to the complex I subunit 3 family. The FPO complex is composed of at least 13 different subunits. FpoA, FpoH, FpoJ, FpoK, FpoL, FpoM and FpoN proteins constitute the membrane sector of the complex.

It localises to the cell membrane. The enzyme catalyses methanophenazine + reduced coenzyme F420-(gamma-L-Glu)(n) = dihydromethanophenazine + oxidized coenzyme F420-(gamma-L-Glu)(n) + H(+). Component of the F(420)H(2) dehydrogenase (FPO complex) which is part of the energy-conserving F(420)H(2):heterodisulfide oxidoreductase system. The membrane-bound electron transfer system of the complex plays an important role in the metabolism of methylotrophic methanogens when the organisms grow on methanol or methylamines. Catalyzes the oxidation of methanophenazine to dihydromethanophenazine. It shuttles electrons from F(420)H(2), via FAD and iron-sulfur (Fe-S) centers, to methanophenazine (an electron carrier in the membrane). It couples the redox reaction to proton translocation (for every two electrons transferred, two hydrogen ions are translocated across the cytoplasmic membrane), and thus conserves the redox energy in a proton gradient. It also catalyzes the oxidation of F(420)H(2) with quinones such as 2,3-dimethyl-1,4-naphthoquinone, 2-methyl-1,4-naphthoquinone and tetramethyl-p-benzoquinone. The protein is F(420)H(2) dehydrogenase subunit A (fpoA) of Methanosarcina mazei (strain ATCC BAA-159 / DSM 3647 / Goe1 / Go1 / JCM 11833 / OCM 88) (Methanosarcina frisia).